The sequence spans 142 residues: Small ribosomal subunit protein bS16 (142 aa).

Positions 88–142 (GAEGTLRQPEGKTPFVAPDNGSVIIPEAITPKAEKAEEAPAEDAAPAEDDAEKAE) are disordered. Over residues 126 to 142 (APAEDAAPAEDDAEKAE) the composition is skewed to acidic residues.

The protein belongs to the bacterial ribosomal protein bS16 family.

In Kocuria rhizophila (strain ATCC 9341 / DSM 348 / NBRC 103217 / DC2201), this protein is Small ribosomal subunit protein bS16.